The following is a 352-amino-acid chain: Rhodopsin (352 aa).

Residues 1–36 (MNGTEGPYFYVPMSNATGVVRSPYEYPQYYLAPPWA) lie on the Extracellular side of the membrane. N2 and N15 each carry an N-linked (GlcNAc...) asparagine glycan. A helical membrane pass occupies residues 37–61 (YACLAAYMFFLILVGFPVNFLTLYV). Topologically, residues 62 to 73 (TIEHKKLRTPLN) are cytoplasmic. The chain crosses the membrane as a helical span at residues 74–96 (YILLNLAVADLFMVFGGFTTTMY). The Extracellular portion of the chain corresponds to 97-110 (TSLNGYFVFGRLGC). C110 and C187 are disulfide-bonded. The chain crosses the membrane as a helical span at residues 111–133 (NLEGFFATFGGINSLWCLVVLSI). The 'Ionic lock' involved in activated form stabilization motif lies at 134-136 (ERW). Residues 134–152 (ERWVVVCKPMSNFRFGENH) are Cytoplasmic-facing. Residues 153-173 (AIMGVAFTWFMALACTVPPLV) form a helical membrane-spanning segment. At 174–202 (GWSRYIPEGMQCSCGIDYYTRAEGFNNES) the chain is on the extracellular side. The helical transmembrane segment at 203–224 (FVIYMFVVHFLTPLFVITFCYG) threads the bilayer. Over 225–252 (RLVCTVKEAAAQQQESETTQRAEREVTR) the chain is Cytoplasmic. A helical transmembrane segment spans residues 253-274 (MVILMFIAYLVCWLPYASVSWW). Topologically, residues 275–286 (IFTNQGSEFGPI) are extracellular. The chain crosses the membrane as a helical span at residues 287 to 308 (FMTVPAFFAKSSSIYNPVIYIC). K296 is subject to N6-(retinylidene)lysine. Topologically, residues 309 to 352 (LNKQFRHCMITTLCCGKNPFEEEEGASTTASKTEASSVSSVSPA) are cytoplasmic. Residues C322 and C323 are each lipidated (S-palmitoyl cysteine). The tract at residues 331-352 (EEGASTTASKTEASSVSSVSPA) is disordered. The segment covering 334–352 (ASTTASKTEASSVSSVSPA) has biased composition (low complexity).

This sequence belongs to the G-protein coupled receptor 1 family. Opsin subfamily. Post-translationally, phosphorylated on some or all of the serine and threonine residues present in the C-terminal region. In terms of processing, contains one covalently linked retinal chromophore.

Its subcellular location is the membrane. The protein localises to the cell projection. The protein resides in the cilium. It localises to the photoreceptor outer segment. Its function is as follows. Photoreceptor required for image-forming vision at low light intensity. While most salt water fish species use retinal as chromophore, most freshwater fish use 3-dehydroretinal, or a mixture of retinal and 3-dehydroretinal. Light-induced isomerization of 11-cis to all-trans retinal triggers a conformational change that activates signaling via G-proteins. Subsequent receptor phosphorylation mediates displacement of the bound G-protein alpha subunit by arrestin and terminates signaling. The chain is Rhodopsin (rho) from Psalidodon fasciatus (Banded astyanax).